The following is a 333-amino-acid chain: Forkhead box protein unc-130 (333 aa).

The disordered stretch occupies residues 1-126 (MLFSMESILS…MSGHRKSSHA (126 aa)). The span at 14-24 (PKLEPPPKLEP) shows a compositional bias: basic and acidic residues. Polar residues predominate over residues 37–50 (RSNTRLSEPSTSAS). A compositionally biased stretch (basic and acidic residues) spans 52 to 62 (LEHDLKFGESR). The segment covering 98-110 (SSDDAKDDDDDDD) has biased composition (acidic residues). Residues 127-221 (KPPYSYIALI…DNGSFLRRRK (95 aa)) constitute a DNA-binding region (fork-head). Residues 304–333 (APVSSGQKRTSSSSSPNENGSSAVSDKLSA) form a disordered region. Residues 307-333 (SSGQKRTSSSSSPNENGSSAVSDKLSA) are compositionally biased toward low complexity.

In terms of tissue distribution, expressed in ventral body wall muscle. Expressed in the structural cells and two neurons of each ray in the male tail.

It is found in the nucleus. Its function is as follows. Probable transcription factor. Binds to DNA sequence motif 5'-CTGTTTCA-3'. Required for the migration of distal tip cells (DTC) and axonal growth-cones along the dorsal-ventral axis of the body wall, acting by cell autonomous repression of unc-129/TGF-beta expression in ventral body muscle during embyogenesis. Binds to the promoter region of the unc-129 gene. Plays a role in dorsal-ventral patterning and fate specification of the postembryonic mesoderm. Involved in male tail morphogenesis and in embryogenesis. Plays a role in the development of sensory neurons and is required to repress AWA fate and promote ASG fate in the ASG chemosensory neurons. Regulates expression of a class of small RNAs, known as 21U-RNAs. The chain is Forkhead box protein unc-130 from Caenorhabditis elegans.